Here is a 559-residue protein sequence, read N- to C-terminus: MACVSDLVAFTQPLIIGAKPLEIVRRSAAFHPNVWGDYFLKLSQDEKKLESMRERAKVLKEKVLKKLSTIEGGERLELIDTLYHLGVAYNFEKEIEEALEKIYKAYDEDATQDNLCTLALRFRLLRQHGWNASSDVFNKFKETKNGNFKESVASDVLGMLSLYEASYVGTKEDKILEEAISFTTRNLSAALPNMEPLLAERVAHSLELPLHKRLQRLEARYFITMYEKNNAHDEMLLEYAKLDYNLLQALHQNEMKELTKWWTKIDLVGKMKFPRDRVTECYFWPLGAFFEPQHSRGRIFATKITQLTSIIDDLYDVYGTQEELQLFTDVIQRWDMNAKKSLPDYIKPLYEALLSTLKDFEEELSLEGNAYRASFMQQAMKNICMAYFDEAKWYNRGTTPKVEEYLNSAEISCGYPVVATACFTGAGEITTKKLLEWIQSQPKYMKDTCRLCRIVDDIKTYKFEEERGHVASVVACYMEEHKCNEDEALEKLNEDVMNTWKDINKACMRPTPFPMVVMNIIRNLSRVMEILYQFGDGYTFADTVTKERLNLLLKDPIPV.

Residues Asp-312, Asp-316, Asp-456, and Glu-464 each contribute to the Mg(2+) site. The DDXXD motif motif lies at 312–316; the sequence is DDLYD.

It belongs to the terpene synthase family. Tpsa subfamily. It depends on Mg(2+) as a cofactor. Mn(2+) serves as cofactor. Mostly expressed in stems and, to a lower extent, in leaves, roots and fruits.

The enzyme catalyses (2E,6E)-farnesyl diphosphate = (-)-(E)-beta-caryophyllene + diphosphate. It catalyses the reaction (2E,6E)-farnesyl diphosphate = alpha-humulene + diphosphate. It participates in secondary metabolite biosynthesis; terpenoid biosynthesis. Its function is as follows. Sesquiterpene synthase involved in the biosynthesis of volatile compounds that contribute to the characteristic flavors of black pepper. Mediates the conversion of (2E,6E)-farnesyl diphosphate (FPP) into beta-caryophyllene and, as a minor compound, into alpha-humulene. The polypeptide is Terpene synthase 1 (Piper nigrum (Black pepper)).